The sequence spans 148 residues: Arginine repressor (148 aa).

The protein belongs to the ArgR family.

Its subcellular location is the cytoplasm. It functions in the pathway amino-acid biosynthesis; L-arginine biosynthesis [regulation]. Regulates arginine biosynthesis genes. This chain is Arginine repressor, found in Chloroherpeton thalassium (strain ATCC 35110 / GB-78).